The following is a 258-amino-acid chain: Synapse differentiation-inducing gene protein 1 (258 aa).

Over methionine 1 to histidine 181 the chain is Cytoplasmic. Serine 137 is modified (phosphoserine). The chain crosses the membrane as a helical span at residues leucine 182–tyrosine 202. Topologically, residues leucine 203 to phenylalanine 228 are extracellular. The helical intramembrane region spans leucine 229–isoleucine 249. The Extracellular portion of the chain corresponds to alanine 250–leucine 258.

Belongs to the CD225/Dispanin family. As to quaternary structure, homodimer. Interacts with GRIA1 and GRIA2. As to expression, enriched in the cerebellum and also expressed in the neocortex and modestly in the hippocampus (at protein level). Expressed in hippocampal neurons, both in cell body and neurites, however its presence is enriched at excitatory synapses and also found in postsynaptic cells.

It is found in the cell membrane. Its subcellular location is the early endosome membrane. The protein resides in the postsynaptic density membrane. It localises to the synapse. The protein localises to the cell projection. It is found in the dendrite. Its subcellular location is the dendritic spine. Its function is as follows. May regulate AMPA receptor content at nascent synapses, and have a role in postsynaptic development and maturation. This is Synapse differentiation-inducing gene protein 1 (Syndig1) from Rattus norvegicus (Rat).